The chain runs to 138 residues: Putative pre-16S rRNA nuclease (138 aa).

Belongs to the YqgF nuclease family.

Its subcellular location is the cytoplasm. Could be a nuclease involved in processing of the 5'-end of pre-16S rRNA. The chain is Putative pre-16S rRNA nuclease from Enterobacter sp. (strain 638).